The chain runs to 102 residues: MQRQKIRIRLKGFDHRVLDVSTREIVNTAKRTGAQVLGPIPLPTRLEKFTVLRGPHIDKKSREQFEIRTHKRVLDIVDPTPQTVDALMKLDLAAGVDVEIKL.

This sequence belongs to the universal ribosomal protein uS10 family. Part of the 30S ribosomal subunit.

In terms of biological role, involved in the binding of tRNA to the ribosomes. The chain is Small ribosomal subunit protein uS10 from Parvibaculum lavamentivorans (strain DS-1 / DSM 13023 / NCIMB 13966).